Here is a 533-residue protein sequence, read N- to C-terminus: Retinoic acid receptor RXR-beta (533 aa).

Residues 1–24 (MSWAARPPFLPQRHAAGQCGPVGV) form a disordered region. The segment at 1–204 (MSWAARPPFL…PGGPGAGKRL (204 aa)) is modulating. Arg25 is modified (omega-N-methylarginine). The segment at 37 to 183 (RRRRPWLDPA…GPPEDVKPPV (147 aa)) is disordered. The span at 46–61 (AAAAAAAAAAGEQQTP) shows a compositional bias: low complexity. Basic and acidic residues predominate over residues 67–82 (EAGRDGMGDSGRDSRS). Over residues 83–94 (PDSSSPNPLSQG) the composition is skewed to low complexity. Pro residues-rich tracts occupy residues 95–109 (APPP…PPSS) and 118–129 (APPPPPMPPPQL). Residues 130 to 143 (GSPFPVISSSMGSP) show a composition bias toward low complexity. Positions 144-153 (GLPPPAPPGF) are enriched in pro residues. NR C4-type zinc fingers lie at residues 205–225 (CAIC…CEGC) and 241–265 (CRDN…YQKC). Residues 205–270 (CAICGDRSSG…RYQKCLATGM (66 aa)) constitute a DNA-binding region (nuclear receptor). The hinge stretch occupies residues 271 to 295 (KREAVQEERQRGKDKDGDGEGAGGA). The segment covering 276–288 (QEERQRGKDKDGD) has biased composition (basic and acidic residues). Disordered regions lie at residues 276 to 299 (QEER…PEEM) and 313 to 336 (QKSD…NDPV). Residues 296–529 (PEEMPVDRIL…TFLMEMLEAP (234 aa)) enclose the NR LBD domain. Residues 320-329 (EGPGGTGGSG) show a composition bias toward gly residues.

Belongs to the nuclear hormone receptor family. NR2 subfamily. In terms of assembly, homodimer (in vitro). Heterodimer with other retinoic acid receptor family members. Binds DNA preferentially as a RAR/RXR heterodimer. Interacts with NR1H3. Interacts with AKAP13.

It is found in the nucleus. The protein resides in the cytoplasm. Its function is as follows. Receptor for retinoic acid. Retinoic acid receptors bind as heterodimers to their target response elements in response to their ligands, all-trans or 9-cis retinoic acid, and regulate gene expression in various biological processes. The RAR/RXR heterodimers bind to the retinoic acid response elements (RARE). The polypeptide is Retinoic acid receptor RXR-beta (RXRB) (Canis lupus familiaris (Dog)).